The sequence spans 247 residues: Carboxy-S-adenosyl-L-methionine synthase (247 aa).

S-adenosyl-L-methionine-binding positions include Y39, G64 to S66, D89 to N90, D117 to I118, N132, and R199.

Belongs to the class I-like SAM-binding methyltransferase superfamily. Cx-SAM synthase family. Homodimer.

The enzyme catalyses prephenate + S-adenosyl-L-methionine = carboxy-S-adenosyl-L-methionine + 3-phenylpyruvate + H2O. Functionally, catalyzes the conversion of S-adenosyl-L-methionine (SAM) to carboxy-S-adenosyl-L-methionine (Cx-SAM). In Escherichia coli (strain K12 / MC4100 / BW2952), this protein is Carboxy-S-adenosyl-L-methionine synthase.